The chain runs to 392 residues: Na(+)/H(+) antiporter NhaA (392 aa).

A run of 11 helical transmembrane segments spans residues 17-37 (ILLI…LSAL), 59-79 (LILW…GLEV), 95-115 (IFPA…YLFF), 125-145 (GWAI…ALLG), 154-174 (VFLL…IALF), 179-199 (VALV…ILNW), 213-233 (FILW…GVIV), 254-274 (VLHP…NAGV), 290-310 (VGIA…FSWV), 328-348 (IFAV…IAGL), and 363-383 (LGIL…LNSV).

The protein belongs to the NhaA Na(+)/H(+) (TC 2.A.33) antiporter family.

It localises to the cell inner membrane. The catalysed reaction is Na(+)(in) + 2 H(+)(out) = Na(+)(out) + 2 H(+)(in). In terms of biological role, na(+)/H(+) antiporter that extrudes sodium in exchange for external protons. In Proteus mirabilis (strain HI4320), this protein is Na(+)/H(+) antiporter NhaA.